The sequence spans 329 residues: Porphobilinogen deaminase (329 aa).

Residue cysteine 253 is modified to S-(dipyrrolylmethanemethyl)cysteine.

This sequence belongs to the HMBS family. As to quaternary structure, monomer. It depends on dipyrromethane as a cofactor.

The enzyme catalyses 4 porphobilinogen + H2O = hydroxymethylbilane + 4 NH4(+). In terms of biological role, tetrapolymerization of the monopyrrole PBG into the hydroxymethylbilane pre-uroporphyrinogen in several discrete steps. The sequence is that of Porphobilinogen deaminase from Leifsonia xyli subsp. xyli (strain CTCB07).